The primary structure comprises 341 residues: tRNA N6-adenosine threonylcarbamoyltransferase (341 aa).

Fe cation contacts are provided by His115 and His119. Residues 137–141 (IVSGG), Asp170, Gly183, Asp187, and Asn276 each bind substrate. Asp304 is a Fe cation binding site.

Belongs to the KAE1 / TsaD family. Fe(2+) is required as a cofactor.

It localises to the cytoplasm. The catalysed reaction is L-threonylcarbamoyladenylate + adenosine(37) in tRNA = N(6)-L-threonylcarbamoyladenosine(37) in tRNA + AMP + H(+). In terms of biological role, required for the formation of a threonylcarbamoyl group on adenosine at position 37 (t(6)A37) in tRNAs that read codons beginning with adenine. Is involved in the transfer of the threonylcarbamoyl moiety of threonylcarbamoyl-AMP (TC-AMP) to the N6 group of A37, together with TsaE and TsaB. TsaD likely plays a direct catalytic role in this reaction. The sequence is that of tRNA N6-adenosine threonylcarbamoyltransferase from Staphylococcus aureus (strain Mu3 / ATCC 700698).